The chain runs to 366 residues: MPPKKAAPSKADLAKKQKVVEDKTFGLKNKNKSKNVQKYVQSLHQAVQPKPDPTKTAAKKKKEEEKAREKELNDLFKVAVSQPKVPVGVDPKSIVCEFFKVGQCQKGFKCKFSHDLNVQRKGEKIDIYTDKRDAETMEDWDQETLEKVVASKGAEYQQNKPTDIVCKYFLDAVEKKQYGWFWVCPNGGKDCHYRHALPPGYVLKSQMKALLEEESEKIAIEDEIEDQRKKVKTTTPMTTDLFMEWKRKKAEEREAGLAALRAERAKNDRMSGRELFMADSSVFVDDAEAYDVYERQEESEANEEPSNKNQDEGPSSSTSNGKEVEESDDEDINIDDDLDIDELNELEASLSRTSIQIREPGEGTSS.

The tract at residues 43–66 (LHQAVQPKPDPTKTAAKKKKEEEK) is disordered. The stretch at 54–79 (TKTAAKKKKEEEKAREKELNDLFKVA) forms a coiled coil. 2 C3H1-type zinc fingers span residues 90-117 (DPKS…HDLN) and 160-198 (KPTD…HALP). Residues 208–234 (KALLEEESEKIAIEDEIEDQRKKVKTT) are a coiled coil. The disordered stretch occupies residues 293-338 (YERQEESEANEEPSNKNQDEGPSSSTSNGKEVEESDDEDINIDDDL). Positions 312–321 (EGPSSSTSNG) are enriched in polar residues. Residues 325 to 338 (EESDDEDINIDDDL) show a composition bias toward acidic residues.

In Oryza sativa subsp. japonica (Rice), this protein is Zinc finger CCCH domain-containing protein 11.